The following is a 94-amino-acid chain: Co-chaperonin GroES (94 aa).

Belongs to the GroES chaperonin family. As to quaternary structure, heptamer of 7 subunits arranged in a ring. Interacts with the chaperonin GroEL.

The protein resides in the cytoplasm. Together with the chaperonin GroEL, plays an essential role in assisting protein folding. The GroEL-GroES system forms a nano-cage that allows encapsulation of the non-native substrate proteins and provides a physical environment optimized to promote and accelerate protein folding. GroES binds to the apical surface of the GroEL ring, thereby capping the opening of the GroEL channel. This Streptococcus agalactiae protein is Co-chaperonin GroES.